Consider the following 457-residue polypeptide: Aromatic amino acid transport protein AroP (457 aa).

The Cytoplasmic segment spans residues 1–18 (MMEGQQHGEQLKRGLKNR). Residues 19–39 (HIQLIALGGAIGTGLFLGSAS) traverse the membrane as a helical segment. The Periplasmic segment spans residues 40 to 42 (VIQ). Residues 43–63 (SAGPGIILGYAIAGFIAFLIM) form a helical membrane-spanning segment. Topologically, residues 64-98 (RQLGEMVVEEPVAGSFSHFAYKYWGSFAGFASGWN) are cytoplasmic. The chain crosses the membrane as a helical span at residues 99–119 (YWVLYVLVAMAELTAVGKYIQ). Topologically, residues 120-124 (FWYPE) are periplasmic. A helical transmembrane segment spans residues 125-145 (IPTWVSAAVFFVVINAINLTN). Over 146-147 (VK) the chain is Cytoplasmic. The chain crosses the membrane as a helical span at residues 148–168 (VFGEMEFWFAIIKVIAVVAMI). At 169–192 (IFGGWLLFSGNGGPQATVSNLWDQ) the chain is on the periplasmic side. A helical transmembrane segment spans residues 193–213 (GGFLPHGFTGLVMMMAIIMFS). The Cytoplasmic portion of the chain corresponds to 214 to 239 (FGGLELVGITAAEADNPEQSIPKATN). Residues 240 to 260 (QVIYRILIFYIGSLAVLLSLM) form a helical membrane-spanning segment. The Periplasmic portion of the chain corresponds to 261 to 279 (PWTRVTADTSPFVLIFHEL). A helical transmembrane segment spans residues 280–300 (GDTFVANALNIVVLTAALSVY). The Cytoplasmic segment spans residues 301-330 (NSCVYCNSRMLFGLAQQGNAPKALASVDKR). Residues 331 to 351 (GVPVNTILVSALVTALCVLIN) form a helical membrane-spanning segment. Topologically, residues 352-359 (YLAPESAF) are periplasmic. The chain crosses the membrane as a helical span at residues 360–380 (GLLMALVVSALVINWAMISLA). The Cytoplasmic portion of the chain corresponds to 381 to 402 (HMKFRRAKQEQGVVTRFPALLY). A helical transmembrane segment spans residues 403-423 (PLGNWICLLFMAAVLVIMLMT). The Periplasmic segment spans residues 424–426 (PGM). The chain crosses the membrane as a helical span at residues 427–447 (AISVYLIPVWLIVLGIGYLFK). Residues 448 to 457 (EKTAKAVKAH) lie on the Cytoplasmic side of the membrane.

It belongs to the amino acid-polyamine-organocation (APC) superfamily. Amino acid transporter (AAT) (TC 2.A.3.1) family.

It localises to the cell inner membrane. It carries out the reaction L-phenylalanine(in) + H(+)(in) = L-phenylalanine(out) + H(+)(out). The enzyme catalyses L-tryptophan(in) + H(+)(in) = L-tryptophan(out) + H(+)(out). It catalyses the reaction L-tyrosine(in) + H(+)(in) = L-tyrosine(out) + H(+)(out). Its activity is regulated as follows. Strong, mutual inhibition of uptake by tyrosine, phenylalanine, and tryptophan. Transport is also inhibited by the aromatic analogs p-fluorophenylalanine, beta-2-thienylalanine and 5-methyltryptophan. Permease that is involved in the active transport across the cytoplasmic membrane of all three aromatic amino acids, phenylalanine, tyrosine and tryptophan. This chain is Aromatic amino acid transport protein AroP, found in Escherichia coli (strain K12).